Here is a 406-residue protein sequence, read N- to C-terminus: Multidrug resistance protein MdtG (406 aa).

11 consecutive transmembrane segments (helical) span residues 16-36 (VAWL…PFLP), 56-76 (LVFS…GGLA), 90-110 (LGMA…QFLL), 113-133 (ALLG…ATQV), 144-164 (TLST…GLLA), 171-191 (PVFF…LFFT), 222-242 (LFVT…ILTL), 254-274 (IAFI…LSAP), 288-308 (ILIT…FVQT), 317-337 (FLLG…LVYN), and 376-396 (AVFC…WNSL).

The protein belongs to the major facilitator superfamily. DHA1 family. MdtG (TC 2.A.1.2.20) subfamily.

The protein resides in the cell inner membrane. This chain is Multidrug resistance protein MdtG, found in Citrobacter koseri (strain ATCC BAA-895 / CDC 4225-83 / SGSC4696).